The sequence spans 142 residues: Protein spalt-accessory (142 aa).

Positions 1–16 (MKLLIALFVLVNAVIA) are cleaved as a signal peptide. The span at 65–77 (GQGGVSPGQGGFA) shows a compositional bias: gly residues. A disordered region spans residues 65-142 (GQGGVSPGQG…HHEHHGHHRH (78 aa)). The segment covering 112 to 124 (NHHEYPEHHGDHH) has biased composition (basic and acidic residues). Over residues 125–142 (REHHEHHGHHEHHGHHRH) the composition is skewed to basic residues.

It localises to the secreted. Its function is as follows. Likely to be involved in the establishment of the head. This chain is Protein spalt-accessory (sala), found in Drosophila orena (Fruit fly).